We begin with the raw amino-acid sequence, 165 residues long: Cytochrome c-type biogenesis protein CcmE (165 aa).

The Cytoplasmic segment spans residues Met1 to Arg7. The chain crosses the membrane as a helical; Signal-anchor for type II membrane protein span at residues Leu8–Ala28. The Periplasmic portion of the chain corresponds to Met29–Arg165. Heme is bound by residues His122 and Tyr126. The segment covering Gln138 to Pro149 has biased composition (basic and acidic residues). Positions Gln138 to Arg165 are disordered. The span at Gly153 to Arg165 shows a compositional bias: low complexity.

This sequence belongs to the CcmE/CycJ family.

It is found in the cell inner membrane. Functionally, heme chaperone required for the biogenesis of c-type cytochromes. Transiently binds heme delivered by CcmC and transfers the heme to apo-cytochromes in a process facilitated by CcmF and CcmH. The chain is Cytochrome c-type biogenesis protein CcmE from Rhodopseudomonas palustris (strain HaA2).